Reading from the N-terminus, the 600-residue chain is Aspartate--tRNA(Asp/Asn) ligase (600 aa).

Residue E174 participates in L-aspartate binding. Residues Q198–K201 form an aspartate region. R220 provides a ligand contact to L-aspartate. ATP-binding positions include R220–E222 and Q229. H457 is a binding site for L-aspartate. Residue E491 participates in ATP binding. R498 provides a ligand contact to L-aspartate. G543 to R546 is a binding site for ATP.

This sequence belongs to the class-II aminoacyl-tRNA synthetase family. Type 1 subfamily. Homodimer.

The protein localises to the cytoplasm. It carries out the reaction tRNA(Asx) + L-aspartate + ATP = L-aspartyl-tRNA(Asx) + AMP + diphosphate. Aspartyl-tRNA synthetase with relaxed tRNA specificity since it is able to aspartylate not only its cognate tRNA(Asp) but also tRNA(Asn). Reaction proceeds in two steps: L-aspartate is first activated by ATP to form Asp-AMP and then transferred to the acceptor end of tRNA(Asp/Asn). This is Aspartate--tRNA(Asp/Asn) ligase from Burkholderia pseudomallei (strain 668).